Here is a 522-residue protein sequence, read N- to C-terminus: MSITSDEVNFLVYRYLQESGFSHSAFTFGIESHISQSNINGTLVPPSALISILQKGLQYVEAEISINKDGTVFDSRPIESLSLIVAVIPDVVQMRQQAFGEKLTQQQASAAATEASAMAKAATMTPAAISQQNPPKNREATVNGEENGAHEINNHSKPMEIDGDVEIPPNKATVLRGHESEVFICAWNPVSDLLASGSGDSTARIWNLNENSNGGSTQLVLRHCIREGGHDVPSNKDVTSLDWNSDGTLLAMGSYDGFARIWTENGNLASTLGQHKGPIFALKWNKKGNYVLSAGVDKTTIIWDAHTGEAKQQFPFHSAPALDVDWQNNMTFASCSTDMCIHVCRLGCDHPVKTFQGHTNEVNAIKWDPSGMLLASCSDDMTLKIWSMKQDACVHDLQAHSKEIYTIKWSPTGPATSNPNSSIMLASASFDSTVRLWDVEQGVCTHTLMKHQEPVYSVAFSPDGKYLASGSFDKYVHIWNTQSGSLVHSYQGTGGIFEVCWNARGDKVGASASDGSVCVLDL.

At Ser2 the chain carries N-acetylserine. In terms of domain architecture, LisH spans 4–36 (TSDEVNFLVYRYLQESGFSHSAFTFGIESHISQ). An F-box-like domain is found at 41-86 (GTLVPPSALISILQKGLQYVEAEISINKDGTVFDSRPIESLSLIVA). Residue Lys102 is modified to N6-acetyllysine. Ser130 carries the phosphoserine modification. WD repeat units follow at residues 177–216 (GHES…NGGS), 233–272 (PSNK…ASTL), 274–313 (QHKG…AKQQ), 316–354 (FHSA…PVKT), 357–396 (GHTN…CVHD), 399–447 (AHSK…CTHT), 450–489 (KHQE…LVHS), and 491–521 (QGTG…CVLD). Lys287 participates in a covalent cross-link: Glycyl lysine isopeptide (Lys-Gly) (interchain with G-Cter in SUMO2).

The protein belongs to the WD repeat EBI family. In terms of assembly, probable component of the N-Cor repressor complex and some E3 ubiquitin ligase complex. Interacts with NCOR2. Fetal brain and prostate. Expressed in the cochlear spiral ganglion neurons, and in outer and inner hair cells.

The protein resides in the nucleus. In terms of biological role, F-box-like protein involved in the recruitment of the ubiquitin/19S proteasome complex to nuclear receptor-regulated transcription units. Plays an essential role in transcription activation mediated by nuclear receptors. Probably acts as integral component of corepressor complexes that mediates the recruitment of the 19S proteasome complex, leading to the subsequent proteasomal degradation of transcription repressor complexes, thereby allowing cofactor exchange. This Homo sapiens (Human) protein is F-box-like/WD repeat-containing protein TBL1Y (TBL1Y).